Consider the following 561-residue polypeptide: Potassium-transporting ATPase potassium-binding subunit (561 aa).

A run of 10 helical transmembrane segments spans residues 4-24 (IVMQ…PLGI), 65-85 (AVSV…VLML), 133-153 (IGLT…LFAV), 177-197 (LYIL…QGVV), 253-273 (FTNL…VVMF), 285-305 (AIMT…TISE), 380-400 (GLYG…LLVG), 417-437 (MVCL…AVAV), 484-504 (MVGA…ALYL), and 528-548 (FIGL…LPAL).

This sequence belongs to the KdpA family. The system is composed of three essential subunits: KdpA, KdpB and KdpC.

The protein resides in the cell membrane. Its function is as follows. Part of the high-affinity ATP-driven potassium transport (or Kdp) system, which catalyzes the hydrolysis of ATP coupled with the electrogenic transport of potassium into the cytoplasm. This subunit binds the extracellular potassium ions and delivers the ions to the membrane domain of KdpB through an intramembrane tunnel. This is Potassium-transporting ATPase potassium-binding subunit from Listeria monocytogenes serotype 4a (strain HCC23).